A 147-amino-acid chain; its full sequence is Hemoglobin anodic subunit beta (147 aa).

One can recognise a Globin domain in the interval 2–147 (EWTEDERTAI…VTSALARQYH (146 aa)). The heme b site is built by H63 and H92.

This sequence belongs to the globin family. As to quaternary structure, heterotetramer of two alpha chains and two beta chains. As to expression, red blood cells.

Its function is as follows. Involved in oxygen transport from gills to the various peripheral tissues. This Anguilla anguilla (European freshwater eel) protein is Hemoglobin anodic subunit beta (hbb1).